We begin with the raw amino-acid sequence, 390 residues long: GDSL esterase/lipase At1g28640 (390 aa).

A signal peptide spans 1 to 26 (MASSLEKLISSFLLVLYSTTIIVASS). The active-site Nucleophile is the Ser42. 3 N-linked (GlcNAc...) asparagine glycosylation sites follow: Asn105, Asn138, and Asn321. Catalysis depends on residues Asp346 and His349. The N-linked (GlcNAc...) asparagine glycan is linked to Asn364.

It belongs to the 'GDSL' lipolytic enzyme family.

The protein resides in the secreted. The protein is GDSL esterase/lipase At1g28640 of Arabidopsis thaliana (Mouse-ear cress).